The primary structure comprises 333 residues: Extracellular globin (333 aa).

The N-terminal stretch at Met-1–Ala-18 is a signal peptide. 2 consecutive Globin domains span residues Cys-25–Arg-167 and Cys-174–Lys-318. Gln-82 and His-114 together coordinate heme b. A glycan (N-linked (GlcNAc...) asparagine) is linked at Asn-216. Gln-231 and His-263 together coordinate heme b. The segment at Asp-314–His-333 is disordered.

It belongs to the globin family. In terms of assembly, homooctamer.

The protein resides in the secreted. The protein localises to the extracellular space. The protein is Extracellular globin of Pseudoterranova decipiens (Sealworm).